Here is a 437-residue protein sequence, read N- to C-terminus: Branched-chain amino acid transport system 3 carrier protein (437 aa).

A run of 12 helical transmembrane segments spans residues 9 to 29 (ILAL…IIFP), 40 to 60 (VWLA…ITVI), 79 to 99 (YAGG…FAIP), 120 to 140 (ALFV…LYPG), 155 to 175 (ILAL…PIGT), 189 to 209 (FVNG…IVIV), 226 to 246 (YAIV…VSLF), 277 to 297 (LGSS…AVGL), 316 to 336 (LVII…TKLI), 342 to 362 (VLTA…CIGL), 369 to 389 (ILAP…LKAA), and 399 to 419 (LLHL…VATL).

It belongs to the branched chain amino acid transporter family.

The protein resides in the cell inner membrane. In terms of biological role, component of the LIV-III transport system for branched-chain amino acids. BraZ is specific for isoleucine and valine. The LIV-III transport system may be H(+)-coupled. The chain is Branched-chain amino acid transport system 3 carrier protein (braZ) from Pseudomonas aeruginosa (strain ATCC 15692 / DSM 22644 / CIP 104116 / JCM 14847 / LMG 12228 / 1C / PRS 101 / PAO1).